The primary structure comprises 429 residues: Adenylosuccinate synthetase (429 aa).

GTP-binding positions include Gly-12 to Lys-18 and Gly-40 to Thr-42. Asp-13 functions as the Proton acceptor in the catalytic mechanism. Mg(2+) is bound by residues Asp-13 and Gly-40. Residues Asp-13 to Lys-16, Asn-38 to His-41, Thr-128, Arg-142, Gln-223, Thr-238, and Arg-302 each bind IMP. The active-site Proton donor is His-41. Thr-298–Arg-304 serves as a coordination point for substrate. GTP is bound by residues Arg-304, Leu-330–Asp-332, and Ser-412–Gly-414.

This sequence belongs to the adenylosuccinate synthetase family. Homodimer. The cofactor is Mg(2+).

The protein localises to the cytoplasm. The enzyme catalyses IMP + L-aspartate + GTP = N(6)-(1,2-dicarboxyethyl)-AMP + GDP + phosphate + 2 H(+). It participates in purine metabolism; AMP biosynthesis via de novo pathway; AMP from IMP: step 1/2. Functionally, plays an important role in the de novo pathway of purine nucleotide biosynthesis. Catalyzes the first committed step in the biosynthesis of AMP from IMP. This chain is Adenylosuccinate synthetase, found in Lactobacillus johnsonii (strain CNCM I-12250 / La1 / NCC 533).